A 516-amino-acid chain; its full sequence is Endoglucanase 20 (516 aa).

The first 23 residues, M1 to G23, serve as a signal peptide directing secretion. N83 carries N-linked (GlcNAc...) asparagine glycosylation. The active-site Nucleophile is D93. Residues H416, D468, and E477 contribute to the active site.

It belongs to the glycosyl hydrolase 9 (cellulase E) family.

Its subcellular location is the secreted. The catalysed reaction is Endohydrolysis of (1-&gt;4)-beta-D-glucosidic linkages in cellulose, lichenin and cereal beta-D-glucans.. The chain is Endoglucanase 20 (GLU15) from Oryza sativa subsp. japonica (Rice).